Reading from the N-terminus, the 311-residue chain is Cyclin-dependent kinase B1-2 (311 aa).

In terms of domain architecture, Protein kinase spans 4–303 (YEKLEKVGEG…AKAALDHPYF (300 aa)). Residues 10-18 (VGEGTYGKV) and Lys-33 contribute to the ATP site. Tyr-15 bears the Phosphotyrosine mark. Asp-144 (proton acceptor) is an active-site residue. Position 178 is a phosphothreonine (Thr-178).

It belongs to the protein kinase superfamily. CMGC Ser/Thr protein kinase family. CDC2/CDKX subfamily. Interacts with CKS1. In terms of tissue distribution, expressed in flowers.

It carries out the reaction L-seryl-[protein] + ATP = O-phospho-L-seryl-[protein] + ADP + H(+). The enzyme catalyses L-threonyl-[protein] + ATP = O-phospho-L-threonyl-[protein] + ADP + H(+). The catalysed reaction is [DNA-directed RNA polymerase] + ATP = phospho-[DNA-directed RNA polymerase] + ADP + H(+). Its function is as follows. Together with CDKB1-1, promotes both the last division in the stomatal cell lineage as well as the number of stomata. In collaboration with MYB124 and MYB88, restrict the G1/S transition and chloroplast and nuclear number during stomatal formation, and normally maintain fate and developmental progression throughout the stomatal cell lineage. The protein is Cyclin-dependent kinase B1-2 (CDKB1-2) of Arabidopsis thaliana (Mouse-ear cress).